We begin with the raw amino-acid sequence, 568 residues long: Lariat debranching enzyme (568 aa).

Positions 8, 10, 39, and 84 each coordinate a divalent metal cation. Residues 124-154 (SGIFKSHDFKKGHFEFPPYNPETLRSVYHIR) form a lariat recognition loop region. Residues His-174, His-226, and His-228 each coordinate a divalent metal cation. The tract at residues 388 to 568 (IYGERGGKGA…TAVEDEESDS (181 aa)) is disordered. A compositionally biased stretch (polar residues) spans 417-428 (PSDTSGLSSSYN). A compositionally biased stretch (acidic residues) spans 432-444 (ITIEDEWEEEEDG). Positions 467 to 480 (DSDRDSSPQRETAK) are enriched in basic and acidic residues. At Thr-478 the chain carries Phosphothreonine. Over residues 534–549 (GETTQSSAGQTGGTPQ) the composition is skewed to low complexity. Ser-568 carries the post-translational modification Phosphoserine.

It belongs to the lariat debranching enzyme family. Fe(2+) is required as a cofactor. Zn(2+) serves as cofactor. Requires Mn(2+) as cofactor.

The protein localises to the nucleus. With respect to regulation, active in presence of diverse metals including Fe(2+), Zn(2+), Mn(2+). Also activated by Ca(2+). Binds two metal cations in two adjacent alpha and beta metal-binding pockets. Cleaves the 2'-5' phosphodiester linkage at the branch point of excised lariat intron RNA and converts them into linear molecules that can be subsequently degraded, thereby facilitating ribonucleotide turnover. Linked to its role in pre-mRNA processing mechanism, may also participate in retrovirus replication and have an antiviral cell-intrinsic defense function. The sequence is that of Lariat debranching enzyme (dbr1) from Danio rerio (Zebrafish).